The chain runs to 736 residues: Prospero homeobox protein 1 (736 aa).

Polar residues predominate over residues 103 to 135; that stretch reads KNGGTEPSFQASGLSSTGSEVHQEDVCSNSSRD. The segment at 103 to 146 is disordered; that stretch reads KNGGTEPSFQASGLSSTGSEVHQEDVCSNSSRDSPQECLSPFGR. Residues 163–168 carry the Nuclear localization signal motif; it reads RAKRAR. 5 disordered regions span residues 180-220, 261-301, 319-344, 445-465, and 499-518; these read PRVA…QQQS, YDST…EMCE, EIGENKPKREGPKEKDQGPNSFHPEG, NSSDQPASAPPAGGHHASLHQ, and PSASFPGKERASPESLDLTR. The span at 264-274 shows a compositional bias: acidic residues; that stretch reads TDSENDEDGNL. The segment covering 319-335 has biased composition (basic and acidic residues); it reads EIGENKPKREGPKEKDQ. A compositionally biased stretch (low complexity) spans 450-460; sequence PASAPPAGGHH. Over residues 505–518 the composition is skewed to basic and acidic residues; it reads GKERASPESLDLTR. In terms of domain architecture, Prospero-type homeo spans 576-634; the sequence is QEGLSPNHLKKAKLMFFYTRYPSSNMLKTYFSDVKFNRCITSQLIKWFSNFREFYYIQM. Residues 576–734 are homeo-Prospero; sequence QEGLSPNHLK…KSPNCLQELL (159 aa). The Prospero domain maps to 635–734; sequence EKYARQAIND…KSPNCLQELL (100 aa).

It belongs to the Prospero homeodomain family. In terms of tissue distribution, expressed most actively in the developing lens and midgut and at lower levels in the developing brain, heart, muscle and retina.

Its subcellular location is the nucleus. Functionally, transcription factor which may be involved in developmental processes such as cell fate determination, gene transcriptional regulation and progenitor cell regulation in a number of organs. May be essential in the development and function of the eye. May play a role in the regulation of the circadian rhythm by repressing the expression of clock genes. The sequence is that of Prospero homeobox protein 1 (PROX1) from Gallus gallus (Chicken).